Here is a 137-residue protein sequence, read N- to C-terminus: MLQPKRTKFRKQFKGRIHGVAKGGTELNFGEFGLKAVEPERVTARQIEAARRALTRHMKRAGRVWIRVFPDVPVSAKPTEVRMGKGKGAPEYWAARIKPGRIMFEIDGVSVETAREALTLAAAKLPIKTRFIQRIAE.

It belongs to the universal ribosomal protein uL16 family. Part of the 50S ribosomal subunit.

Functionally, binds 23S rRNA and is also seen to make contacts with the A and possibly P site tRNAs. This chain is Large ribosomal subunit protein uL16, found in Xanthobacter autotrophicus (strain ATCC BAA-1158 / Py2).